The sequence spans 399 residues: Succinate--CoA ligase [ADP-forming] subunit beta (399 aa).

In terms of domain architecture, ATP-grasp spans Lys-9 to Glu-254. Residues Lys-46, Gly-53–Gly-55, Val-112, and Glu-117 each bind ATP. Mg(2+) contacts are provided by Asn-209 and Asp-223. Substrate is bound by residues Asn-274 and Gly-331 to Met-333.

It belongs to the succinate/malate CoA ligase beta subunit family. In terms of assembly, heterotetramer of two alpha and two beta subunits. Mg(2+) serves as cofactor.

It carries out the reaction succinate + ATP + CoA = succinyl-CoA + ADP + phosphate. The enzyme catalyses GTP + succinate + CoA = succinyl-CoA + GDP + phosphate. Its pathway is carbohydrate metabolism; tricarboxylic acid cycle; succinate from succinyl-CoA (ligase route): step 1/1. In terms of biological role, succinyl-CoA synthetase functions in the citric acid cycle (TCA), coupling the hydrolysis of succinyl-CoA to the synthesis of either ATP or GTP and thus represents the only step of substrate-level phosphorylation in the TCA. The beta subunit provides nucleotide specificity of the enzyme and binds the substrate succinate, while the binding sites for coenzyme A and phosphate are found in the alpha subunit. This is Succinate--CoA ligase [ADP-forming] subunit beta from Novosphingobium aromaticivorans (strain ATCC 700278 / DSM 12444 / CCUG 56034 / CIP 105152 / NBRC 16084 / F199).